We begin with the raw amino-acid sequence, 117 residues long: Immunoglobulin heavy variable 1-58 (117 aa).

The first 19 residues, 1–19 (MDWIWRILFLVGAATGAHS), serve as a signal peptide directing secretion. The framework-1 stretch occupies residues 20-44 (QMQLVQSGPEVKKPGTSVKVSCKAS). Residues 20 to 117 (QMQLVQSGPE…EDTAVYYCAA (98 aa)) enclose the Ig-like domain. A disulfide bond links Cys-41 and Cys-115. The segment at 45 to 52 (GFTFTSSA) is complementarity-determining-1. The framework-2 stretch occupies residues 53–69 (VQWVRQARGQRLEWIGW). A complementarity-determining-2 region spans residues 70–77 (IVVGSGNT). The interval 78–115 (NYAQKFQERVTITRDMSTSTAYMELSSLRSEDTAVYYC) is framework-3. Positions 116–117 (AA) are complementarity-determining-3.

In terms of assembly, immunoglobulins are composed of two identical heavy chains and two identical light chains; disulfide-linked.

It is found in the secreted. Its subcellular location is the cell membrane. Its function is as follows. V region of the variable domain of immunoglobulin heavy chains that participates in the antigen recognition. Immunoglobulins, also known as antibodies, are membrane-bound or secreted glycoproteins produced by B lymphocytes. In the recognition phase of humoral immunity, the membrane-bound immunoglobulins serve as receptors which, upon binding of a specific antigen, trigger the clonal expansion and differentiation of B lymphocytes into immunoglobulins-secreting plasma cells. Secreted immunoglobulins mediate the effector phase of humoral immunity, which results in the elimination of bound antigens. The antigen binding site is formed by the variable domain of one heavy chain, together with that of its associated light chain. Thus, each immunoglobulin has two antigen binding sites with remarkable affinity for a particular antigen. The variable domains are assembled by a process called V-(D)-J rearrangement and can then be subjected to somatic hypermutations which, after exposure to antigen and selection, allow affinity maturation for a particular antigen. This chain is Immunoglobulin heavy variable 1-58, found in Homo sapiens (Human).